The following is a 161-amino-acid chain: MIAIHILLLVFSNIVLPALCINVFVYGTLKKGQSNYHELTNTTHGQAEFITCARTKDPYPMVIATKDKFPFLLNVPGSGQQVYGEIYNVDQNMLDFLDEFEECPDLYQRTSIQLKILKGNGDSEEAFVYSTSTFDPDWLNKPTFSVYDATGDPGNNCVSRE.

26–29 (YGTL) contacts substrate. E101 serves as the catalytic Proton acceptor.

Belongs to the gamma-glutamylcyclotransferase family.

The enzyme catalyses epsilon-(gamma-L-glutamyl)-L-lysine = 5-oxo-L-proline + L-lysine. Functionally, may contribute to degradation of proteins cross-linked by transglutaminases by degrading the cross-link between a lysine and a glutamic acid residue. Catalyzes the formation of 5-oxo-L-proline from L-gamma-glutamyl-L-epsilon-lysine. The protein is Gamma-glutamylaminecyclotransferase A (ggact.1) of Danio rerio (Zebrafish).